Here is a 431-residue protein sequence, read N- to C-terminus: Histidinol dehydrogenase (431 aa).

Residues Tyr127, Gln185, and Asn208 each coordinate NAD(+). Substrate is bound by residues Ser234, Gln256, and His259. Zn(2+) is bound by residues Gln256 and His259. Active-site proton acceptor residues include Glu323 and His324. Residues His324, Asp357, Glu411, and His416 each coordinate substrate. Asp357 is a binding site for Zn(2+). His416 lines the Zn(2+) pocket.

Belongs to the histidinol dehydrogenase family. Requires Zn(2+) as cofactor.

The enzyme catalyses L-histidinol + 2 NAD(+) + H2O = L-histidine + 2 NADH + 3 H(+). It functions in the pathway amino-acid biosynthesis; L-histidine biosynthesis; L-histidine from 5-phospho-alpha-D-ribose 1-diphosphate: step 9/9. In terms of biological role, catalyzes the sequential NAD-dependent oxidations of L-histidinol to L-histidinaldehyde and then to L-histidine. The protein is Histidinol dehydrogenase of Vibrio vulnificus (strain YJ016).